We begin with the raw amino-acid sequence, 209 residues long: Glutathione S-transferase 1, isoform C (209 aa).

In terms of domain architecture, GST N-terminal spans 1–80; that stretch reads MDFYYLPGSA…YLAEKYGKDD (80 aa). Residues S9, 50–52, and 64–66 contribute to the glutathione site; these read HCI and ESR. The 122-residue stretch at 86–207 folds into the GST C-terminal domain; it reads DPQKRAVVNQ…AGIEEFKKYF (122 aa).

It belongs to the GST superfamily. Theta family. As to quaternary structure, homodimer.

It carries out the reaction RX + glutathione = an S-substituted glutathione + a halide anion + H(+). It catalyses the reaction 1,1,1-trichloro-2,2-bis(4-chlorophenyl)ethane = 1,1-dichloro-2,2-bis(4-chlorophenyl)ethylene + chloride + H(+). Its function is as follows. Conjugation of reduced glutathione to a wide number of exogenous and endogenous hydrophobic electrophiles. Has DDT dehydrochlorinase activity. The chain is Glutathione S-transferase 1, isoform C (GstD1) from Anopheles gambiae (African malaria mosquito).